The chain runs to 86 residues: uncharacterized protein (86 aa).

This sequence to C.jejuni CJ0253.

This is an uncharacterized protein from Helicobacter pylori (strain ATCC 700392 / 26695) (Campylobacter pylori).